The following is a 218-amino-acid chain: Ribonuclease HII (218 aa).

An RNase H type-2 domain is found at 24 to 218 (ESIAGVDEVG…KLFAVNGSLT (195 aa)). 3 residues coordinate a divalent metal cation: D30, E31, and D126.

Belongs to the RNase HII family. Mn(2+) serves as cofactor. Requires Mg(2+) as cofactor.

It localises to the cytoplasm. The catalysed reaction is Endonucleolytic cleavage to 5'-phosphomonoester.. Endonuclease that specifically degrades the RNA of RNA-DNA hybrids. The polypeptide is Ribonuclease HII (Prochlorococcus marinus (strain MIT 9313)).